The chain runs to 214 residues: Pyrrolidone-carboxylate peptidase (214 aa).

Catalysis depends on residues Glu80, Cys143, and His166.

This sequence belongs to the peptidase C15 family. In terms of assembly, homotetramer.

The protein localises to the cytoplasm. The enzyme catalyses Release of an N-terminal pyroglutamyl group from a polypeptide, the second amino acid generally not being Pro.. Its function is as follows. Removes 5-oxoproline from various penultimate amino acid residues except L-proline. The chain is Pyrrolidone-carboxylate peptidase from Klebsiella pneumoniae (strain 342).